The following is a 381-amino-acid chain: Acetylornithine deacetylase (381 aa).

Zn(2+) is bound at residue histidine 79. Aspartate 81 is an active-site residue. Aspartate 111 is a Zn(2+) binding site. Glutamate 143 is an active-site residue. Glutamate 144, glutamate 168, and histidine 354 together coordinate Zn(2+).

The protein belongs to the peptidase M20A family. ArgE subfamily. Homodimer. The cofactor is Zn(2+). Requires Co(2+) as cofactor. Glutathione serves as cofactor.

It localises to the cytoplasm. It catalyses the reaction N(2)-acetyl-L-ornithine + H2O = L-ornithine + acetate. The protein operates within amino-acid biosynthesis; L-arginine biosynthesis; L-ornithine from N(2)-acetyl-L-ornithine (linear): step 1/1. Catalyzes the hydrolysis of the amide bond of N(2)-acetylated L-amino acids. Cleaves the acetyl group from N-acetyl-L-ornithine to form L-ornithine, an intermediate in L-arginine biosynthesis pathway, and a branchpoint in the synthesis of polyamines. This is Acetylornithine deacetylase from Buchnera aphidicola subsp. Acyrthosiphon pisum (strain APS) (Acyrthosiphon pisum symbiotic bacterium).